The chain runs to 337 residues: Outer membrane protein U (337 aa).

The N-terminal stretch at 1-21 (MKKTLIALSVSAAAMATGVNA) is a signal peptide.

It belongs to the Gram-negative porin family. As to quaternary structure, homotrimer.

Its subcellular location is the cell outer membrane. Functionally, forms pores that allow passive diffusion of small molecules across the outer membrane. The polypeptide is Outer membrane protein U (ompU) (Vibrio parahaemolyticus serotype O3:K6 (strain RIMD 2210633)).